The following is a 112-amino-acid chain: MKEKTTQLYEGAYVFSVTLSEEARRKALEKVTSGITNYGGEILKIHDQGRKKLAYTIRGAREGYYYLIYFTVVPGVIAELWKEYHLNEDLLRFLTLKTDAVKEVLEFASLPE.

This sequence belongs to the bacterial ribosomal protein bS6 family.

Functionally, binds together with bS18 to 16S ribosomal RNA. The sequence is that of Small ribosomal subunit protein bS6 from Chlamydia abortus (strain DSM 27085 / S26/3) (Chlamydophila abortus).